We begin with the raw amino-acid sequence, 453 residues long: Homogentisate 1,2-dioxygenase (453 aa).

Catalysis depends on histidine 306, which acts as the Proton acceptor. Fe cation is bound by residues histidine 349 and glutamate 355. Homogentisate is bound by residues tyrosine 364 and histidine 385. Histidine 385 serves as a coordination point for Fe cation.

It belongs to the homogentisate dioxygenase family. Hexamer; dimer of trimers. It depends on Fe cation as a cofactor.

It catalyses the reaction homogentisate + O2 = 4-maleylacetoacetate + H(+). It participates in amino-acid degradation; L-phenylalanine degradation; acetoacetate and fumarate from L-phenylalanine: step 4/6. Its function is as follows. Involved in the catabolism of homogentisate (2,5-dihydroxyphenylacetate or 2,5-OH-PhAc), a central intermediate in the degradation of phenylalanine and tyrosine. Catalyzes the oxidative ring cleavage of the aromatic ring of homogentisate to yield maleylacetoacetate. The sequence is that of Homogentisate 1,2-dioxygenase from Rhizobium rhizogenes (strain K84 / ATCC BAA-868) (Agrobacterium radiobacter).